The following is a 262-amino-acid chain: Hydroxyethylthiazole kinase (262 aa).

Substrate is bound at residue Met44. The ATP site is built by Arg118 and Thr166. Gly193 contributes to the substrate binding site.

The protein belongs to the Thz kinase family. Mg(2+) is required as a cofactor.

The enzyme catalyses 5-(2-hydroxyethyl)-4-methylthiazole + ATP = 4-methyl-5-(2-phosphooxyethyl)-thiazole + ADP + H(+). Its pathway is cofactor biosynthesis; thiamine diphosphate biosynthesis; 4-methyl-5-(2-phosphoethyl)-thiazole from 5-(2-hydroxyethyl)-4-methylthiazole: step 1/1. Catalyzes the phosphorylation of the hydroxyl group of 4-methyl-5-beta-hydroxyethylthiazole (THZ). This is Hydroxyethylthiazole kinase from Chlamydia caviae (strain ATCC VR-813 / DSM 19441 / 03DC25 / GPIC) (Chlamydophila caviae).